Consider the following 222-residue polypeptide: Large ribosomal subunit protein mL64 (222 aa).

Disordered regions lie at residues 21–47 (RSRS…NLLT) and 186–222 (QRKR…EPSS). Residues 98–207 (TMQESLRLQQ…KKEARIAAMA (110 aa)) adopt a coiled-coil conformation. Residues 184–200 (KQQRKRLKEERQRQKKE) carry the Nuclear localization signal motif. A compositionally biased stretch (basic and acidic residues) spans 186 to 202 (QRKRLKEERQRQKKEAR). Over residues 203–215 (IAAMASAEAQDSA) the composition is skewed to low complexity.

This sequence belongs to the mitochondrion-specific ribosomal protein mL64 family. As to quaternary structure, component of the mitochondrial ribosome large subunit (39S) which comprises a 16S rRNA and about 50 distinct proteins. Interacts with GADD45A, GADD45B and GADD45G. Interacts with NR4A1 via the NR4A1 AB domain. Interacts with ATAD3A and ATAD3B.

It is found in the mitochondrion. The protein localises to the nucleus. Functionally, acts as a negative regulator of G1 to S cell cycle phase progression by inhibiting cyclin-dependent kinases. Inhibitory effects are additive with GADD45 proteins but also occur in the absence of GADD45 proteins. Acts as a repressor of the orphan nuclear receptor NR4A1 by inhibiting AB domain-mediated transcriptional activity. May be involved in the hormone-mediated regulation of NR4A1 transcriptional activity. May play a role in mitochondrial protein synthesis. The polypeptide is Large ribosomal subunit protein mL64 (Gadd45gip1) (Mus musculus (Mouse)).